We begin with the raw amino-acid sequence, 219 residues long: Large ribosomal subunit protein bL25 (219 aa).

The tract at residues 188–219 (TVAAPADTAVQPESSSTKGKKDEDGALAKDKK) is disordered. A compositionally biased stretch (basic and acidic residues) spans 206–219 (GKKDEDGALAKDKK).

The protein belongs to the bacterial ribosomal protein bL25 family. CTC subfamily. In terms of assembly, part of the 50S ribosomal subunit; part of the 5S rRNA/L5/L18/L25 subcomplex. Contacts the 5S rRNA. Binds to the 5S rRNA independently of L5 and L18.

This is one of the proteins that binds to the 5S RNA in the ribosome where it forms part of the central protuberance. The chain is Large ribosomal subunit protein bL25 from Elusimicrobium minutum (strain Pei191).